The chain runs to 530 residues: MNLDAWLDIQPAKKLYTIKEASRILTKKFGKEIKEHNISYLVQYGRVNKYKIKNRVYVDIDEVENYYKKLFFEKRKEWEEKLGFKLDWDLAFDLLSEKERTKHVHGIHPYKGKFIPQLVEYFLKRHFNVGDIIIDPFMGSGTTLVQCMEMGINSIGIDISPFNCLIAEVKLQKYDIQKLKKILLDMLNKTKEFSKNLGDDEFVKEMDKLIEKYNKKYFTLEYKRKLSKKEIDEDSYSEKIMEMFYLEYKKLKEKYCKNDDEFDDIFKDKPFLYKWYSPRIRAELNFYLNLIKDCRDETIKKVAMIILSRTARSVRGTTHFDLATLKEPVFDPYYCYKHKKICRPVQTILRHLEEYTNDVISRIEEFSKIRKDAYYLIINGDSRTVDIEEELKKHPNFYELYKNKKIDGIFTSPPYLGQIDYHEQHAYAYELFDIPRLDELEIGPKFKGSSKKAQKEYIEGISDVLINMKRFLNEDAKIFIVVNDKKNLYKEIFEKSGLILVREFKRPVLNRTERDRNPYYESIFELKMEE.

It belongs to the N(4)/N(6)-methyltransferase family. N(4) subfamily.

It carries out the reaction a 2'-deoxycytidine in DNA + S-adenosyl-L-methionine = an N(4)-methyl-2'-deoxycytidine in DNA + S-adenosyl-L-homocysteine + H(+). In terms of biological role, an alpha subtype methylase that recognizes the double-stranded sequence 5'-GGNCC-3', methylates C-5 on both strands, and protects the DNA from cleavage by the MjaII endonuclease. In Methanocaldococcus jannaschii (strain ATCC 43067 / DSM 2661 / JAL-1 / JCM 10045 / NBRC 100440) (Methanococcus jannaschii), this protein is Type II methyltransferase M.MjaII (mjaIIM).